The following is a 274-amino-acid chain: 2,3,4,5-tetrahydropyridine-2,6-dicarboxylate N-succinyltransferase (274 aa).

Positions 106 and 143 each coordinate substrate.

It belongs to the transferase hexapeptide repeat family. In terms of assembly, homotrimer.

It is found in the cytoplasm. The enzyme catalyses (S)-2,3,4,5-tetrahydrodipicolinate + succinyl-CoA + H2O = (S)-2-succinylamino-6-oxoheptanedioate + CoA. Its pathway is amino-acid biosynthesis; L-lysine biosynthesis via DAP pathway; LL-2,6-diaminopimelate from (S)-tetrahydrodipicolinate (succinylase route): step 1/3. This Acidovorax ebreus (strain TPSY) (Diaphorobacter sp. (strain TPSY)) protein is 2,3,4,5-tetrahydropyridine-2,6-dicarboxylate N-succinyltransferase.